Consider the following 331-residue polypeptide: UDP-GalNAc:beta-1,3-N-acetylgalactosaminyltransferase 1 (331 aa).

The Cytoplasmic portion of the chain corresponds to 1–20; that stretch reads MASALWTVLPSRMSLRSLKW. The chain crosses the membrane as a helical; Signal-anchor for type II membrane protein span at residues 21-43; sequence SLLLLSLLSFFVMWYLSLPHYNV. Topologically, residues 44–331 are lumenal; sequence IERVNWMYFY…VMLRNTTCHY (288 aa). Residues N72, N154, N198, N212, and N326 are each glycosylated (N-linked (GlcNAc...) asparagine).

This sequence belongs to the glycosyltransferase 31 family. The cofactor is Mg(2+). Higher expression in heart and brain, and to a lesser extent in lung, placenta, kidney and testis. Lower expression in liver, spleen and stomach. No expression in skeletal muscle.

The protein localises to the golgi apparatus membrane. The catalysed reaction is a globoside Gb3Cer (d18:1(4E)) + UDP-N-acetyl-alpha-D-galactosamine = a globoside Gb4Cer (d18:1(4E)) + UDP + H(+). Its pathway is protein modification; protein glycosylation. Functionally, transfers N-acetylgalactosamine onto globotriaosylceramide. Plays a critical role in preimplantation stage embryonic development. The polypeptide is UDP-GalNAc:beta-1,3-N-acetylgalactosaminyltransferase 1 (Homo sapiens (Human)).